Reading from the N-terminus, the 118-residue chain is Ribosome-binding factor A (118 aa).

Belongs to the RbfA family. Monomer. Binds 30S ribosomal subunits, but not 50S ribosomal subunits or 70S ribosomes.

It localises to the cytoplasm. In terms of biological role, one of several proteins that assist in the late maturation steps of the functional core of the 30S ribosomal subunit. Associates with free 30S ribosomal subunits (but not with 30S subunits that are part of 70S ribosomes or polysomes). Required for efficient processing of 16S rRNA. May interact with the 5'-terminal helix region of 16S rRNA. This Geobacter sulfurreducens (strain ATCC 51573 / DSM 12127 / PCA) protein is Ribosome-binding factor A.